Reading from the N-terminus, the 64-residue chain is Large ribosomal subunit protein bL32 (64 aa).

A compositionally biased stretch (basic residues) spans 1–15 (MAVPKRKVSKSRRDS). Positions 1–21 (MAVPKRKVSKSRRDSRRAQTF) are disordered.

This sequence belongs to the bacterial ribosomal protein bL32 family.

The polypeptide is Large ribosomal subunit protein bL32 (Symbiobacterium thermophilum (strain DSM 24528 / JCM 14929 / IAM 14863 / T)).